Reading from the N-terminus, the 339-residue chain is Biotin synthase (339 aa).

The Radical SAM core domain occupies 55 to 288; it reads LSEGALHSCS…GKIIKFAAGR (234 aa). [4Fe-4S] cluster is bound by residues C73, C77, and C80. The [2Fe-2S] cluster site is built by C152, C213, and K283.

Belongs to the radical SAM superfamily. Biotin synthase family. Homodimer. The cofactor is [4Fe-4S] cluster. It depends on [2Fe-2S] cluster as a cofactor.

The enzyme catalyses (4R,5S)-dethiobiotin + (sulfur carrier)-SH + 2 reduced [2Fe-2S]-[ferredoxin] + 2 S-adenosyl-L-methionine = (sulfur carrier)-H + biotin + 2 5'-deoxyadenosine + 2 L-methionine + 2 oxidized [2Fe-2S]-[ferredoxin]. The protein operates within cofactor biosynthesis; biotin biosynthesis; biotin from 7,8-diaminononanoate: step 2/2. Catalyzes the conversion of dethiobiotin (DTB) to biotin by the insertion of a sulfur atom into dethiobiotin via a radical-based mechanism. This chain is Biotin synthase, found in Chlorobium phaeobacteroides (strain BS1).